The chain runs to 560 residues: MSRKLFASILIGALLGIGAPPSAHAGADDVVDSSKSFVMENFSSYHGTKPGYVDSIQKGIQKPKSGTQGNYDDDWKGFYSTDNKYDAAGYSVDNENPLSGKAGDVVKVTYPGLTKVLALKVDNAETIKKELGLSLTEPLMEQVGTEEFIKRFGDGASRVVLSLPFAEGSSSVEYINNWEQAKALSVKLEINFETRGKRGQDAMYEYMAQACAGNRVRRSVGGSLSCINLDWDVIRDKTKTKIESLKEHGPIKNKMSESPNKTVSEEKAKQYLEEFHQTALEHPELSELKTVTGTNRVFAGANYAAWAVNVAQVIDSETADNLEKTTAALSILPGIGSVMGIADGAVHHNTEEIVAQSIALSSLMVAQAIPLVGELVDIGFAAYNFVESIINLFQVVHNSYNRSAYSPGHKTQPFLHDGYAVSWNTVEDSIIRTGFQGESGHDIKITAENTPLPIASVLLPTIPGKLDVNKSKTHISVNGRKIRMRCRAIDGDVTFCRPKSPVYVGNGVHANLHVAFHRSSSEKIHSNEISSDSIGVLGYQKTVDHTKVNSKLSLFFEIKS.

Positions Met-1–Ala-25 are cleaved as a signal peptide. NAD(+) contacts are provided by His-46 and Tyr-90. Glu-173 is an active-site residue. 2 disulfide bridges follow: Cys-211–Cys-226 and Cys-486–Cys-496.

This Corynebacterium diphtheriae protein is Diphtheria toxin homolog CRM228.